Here is a 120-residue protein sequence, read N- to C-terminus: Large ribosomal subunit protein uL18 (120 aa).

Belongs to the universal ribosomal protein uL18 family. In terms of assembly, part of the 50S ribosomal subunit; part of the 5S rRNA/L5/L18/L25 subcomplex. Contacts the 5S and 23S rRNAs.

This is one of the proteins that bind and probably mediate the attachment of the 5S RNA into the large ribosomal subunit, where it forms part of the central protuberance. In Halalkalibacterium halodurans (strain ATCC BAA-125 / DSM 18197 / FERM 7344 / JCM 9153 / C-125) (Bacillus halodurans), this protein is Large ribosomal subunit protein uL18.